The chain runs to 281 residues: NADPH-dependent 7-cyano-7-deazaguanine reductase (281 aa).

88–90 (VES) serves as a coordination point for substrate. 90-91 (SK) provides a ligand contact to NADPH. C189 (thioimide intermediate) is an active-site residue. D196 acts as the Proton donor in catalysis. Residue 228-229 (HE) coordinates substrate. Residue 257–258 (RG) participates in NADPH binding.

It belongs to the GTP cyclohydrolase I family. QueF type 2 subfamily. In terms of assembly, homodimer.

The protein resides in the cytoplasm. The catalysed reaction is 7-aminomethyl-7-carbaguanine + 2 NADP(+) = 7-cyano-7-deazaguanine + 2 NADPH + 3 H(+). Its pathway is tRNA modification; tRNA-queuosine biosynthesis. Its function is as follows. Catalyzes the NADPH-dependent reduction of 7-cyano-7-deazaguanine (preQ0) to 7-aminomethyl-7-deazaguanine (preQ1). The polypeptide is NADPH-dependent 7-cyano-7-deazaguanine reductase (Klebsiella pneumoniae subsp. pneumoniae (strain ATCC 700721 / MGH 78578)).